The following is a 928-amino-acid chain: Sodium/calcium exchanger 3 (928 aa).

The signal sequence occupies residues 1–30 (MAWLRLQPLTSAFLHFGLVTFVLFLNCLRA). The Extracellular segment spans residues 31 to 73 (EAGDSGDVPSAGQNNESCSGSSDCKEGVILPIWYPENPSLGDK). Asn45 is a glycosylation site (N-linked (GlcNAc...) asparagine). A helical membrane pass occupies residues 74–94 (IARVIVYFVALIYMFLGVSII). The Cytoplasmic segment spans residues 95–147 (ADRFMASIEVITSQEREVTIKKPNGETSTTTIRVWNETVSNLTLMALGSSAPE). The helical transmembrane segment at 148–168 (ILLSLIEVCGHGFIAGDLGPS) threads the bilayer. A topological domain (extracellular) is located at residue Thr169. A helical membrane pass occupies residues 170–190 (IVGSAAFNMFIIIGICVYVIP). Topologically, residues 191-201 (DGETRKIKHLR) are cytoplasmic. A helical membrane pass occupies residues 202–222 (VFFVTAAWSIFAYIWLYMILA). The Extracellular segment spans residues 223-230 (VFSPGVVQ). The chain crosses the membrane as a helical span at residues 231 to 251 (VWEGLLTLFFFPVCVLLAWVA). At 252-727 (DKRLLFYKYM…DESGEERLPS (476 aa)) the chain is on the cytoplasmic side. The tract at residues 253–272 (KRLLFYKYMHKKYRTDKHRG) is putative calmodulin-binding region. Calx-beta domains are found at residues 390 to 485 (EPED…VRLS) and 519 to 618 (ATVT…VIEM). Residues Glu409, Asp445, Asp470, Asp471, Ile473, Glu475, Glu478, Asp525, Asp526, Asp527, Glu543, Asp579, Asp605, and Glu673 each coordinate Ca(2+). Residues 728-748 (CFDYVMHFLTVFWKVLFACVP) traverse the membrane as a helical segment. The Extracellular portion of the chain corresponds to 749-755 (PTEYCHG). Residues 756–776 (WACFVVSILIIGMLTAIIGDL) traverse the membrane as a helical segment. Residues 777 to 779 (ASH) are Cytoplasmic-facing. The chain crosses the membrane as a helical span at residues 780-800 (FGCTIGLKDSVTAVVFVAFGT). The Extracellular portion of the chain corresponds to 801–829 (SVPDTFASKAAALQDVYADASIGNVTGSN). Asn824 is a glycosylation site (N-linked (GlcNAc...) asparagine). Residues 830-850 (AVNVFLGIGLAWSVAAIYWAM) form a helical membrane-spanning segment. The Cytoplasmic segment spans residues 851-861 (QGQEFHVSAGT). A helical membrane pass occupies residues 862–882 (LAFSVTLFTIFAFVCLSVLLY). At 883–904 (RRRPHLGGELGGPRGCKLATTW) the chain is on the extracellular side. A helical membrane pass occupies residues 905-925 (LFVSLWLLYILFATLEAYCYI). Over 926–928 (KGF) the chain is Cytoplasmic.

It belongs to the Ca(2+):cation antiporter (CaCA) (TC 2.A.19) family. SLC8 subfamily. Interacts with AKAP1. In terms of tissue distribution, detected in gray and white matter in the spinal cord. Detected in hippocampus neurons. Detected in brain cortex neurons. Detected in skeletal muscle (at protein level). Isoform 1 and isoform 2 are highly expressed in brain; levels are higher for isoform 2. Isoform 1 and isoform 2 are detected in soleus muscle; levels are higher for isoform 1. Detected in gastrocnemius muscle.

It localises to the cell membrane. The protein localises to the perikaryon. The protein resides in the cell projection. Its subcellular location is the dendrite. It is found in the dendritic spine. It localises to the sarcolemma. The protein localises to the cytoplasm. The protein resides in the sarcoplasm. Its subcellular location is the cell junction. It is found in the mitochondrion outer membrane. It localises to the perinuclear region. The protein localises to the endoplasmic reticulum membrane. The enzyme catalyses Ca(2+)(in) + 3 Na(+)(out) = Ca(2+)(out) + 3 Na(+)(in). With respect to regulation, calcium transport is stimulated by cytoplasmic Ca(2+) and is inhibited by Na(+). Isoform 1 is more sensitive to stimulation by Ca(2+) than isoform 2. Isoform 2 is more sensitive to inactivation by Na(+). Mediates the electrogenic exchange of Ca(2+) against Na(+) ions across the cell membrane, and thereby contributes to the regulation of cytoplasmic Ca(2+) levels and Ca(2+)-dependent cellular processes. Contributes to cellular Ca(2+) homeostasis in excitable cells, both in muscle and in brain. In a first phase, voltage-gated channels mediate the rapid increase of cytoplasmic Ca(2+) levels due to release of Ca(2+) stores from the endoplasmic reticulum. SLC8A3 mediates the export of Ca(2+) from the cell during the next phase, so that cytoplasmic Ca(2+) levels rapidly return to baseline. Contributes to Ca(2+) transport during excitation-contraction coupling in muscle. In neurons, contributes to the rapid decrease of cytoplasmic Ca(2+) levels back to baseline after neuronal activation, and thereby contributes to modulate synaptic plasticity, learning and memory. Required for normal oligodendrocyte differentiation and for normal myelination. Mediates Ca(2+) efflux from mitochondria and contributes to mitochondrial Ca(2+) ion homeostasis. Isoform 1 displays higher calcium exchanger activity than isoform 2, probably because isoform 1 has a lower threshold for activation by cytoplasmic Ca(2+). The sequence is that of Sodium/calcium exchanger 3 from Mus musculus (Mouse).